Here is an 85-residue protein sequence, read N- to C-terminus: MNISKFEQRTLHALARGGLIRVEKDDKGKIHTATCVTREGWLLADCTVATFRRLRKRRLIASKDGSPYRITREGLHAVRAQLDNR.

Belongs to the UPF0386 family.

The chain is UPF0386 protein Plav_1374 from Parvibaculum lavamentivorans (strain DS-1 / DSM 13023 / NCIMB 13966).